We begin with the raw amino-acid sequence, 829 residues long: Periplasmic nitrate reductase (829 aa).

Residues 1–30 constitute a signal peptide (tat-type signal); sequence MKLSRRDFMKANAVAAAAAVAGVSAPTLAA. A 4Fe-4S Mo/W bis-MGD-type domain is found at 41–97; sequence IKWDKAPCRFCGTGCSVLVGSQDGRVVATQGDPDAPVNRGLNCIKGYFLSKIMYGED. [4Fe-4S] cluster-binding residues include Cys48, Cys51, Cys55, and Cys83. Mo-bis(molybdopterin guanine dinucleotide) contacts are provided by residues Lys85, Gln152, Asn177, Cys181, 214 to 221, 245 to 249, 264 to 266, Met374, Gln378, Asn484, 510 to 511, Lys533, Asp560, and 719 to 728; these read WGSNMAEM, STFEH, QTD, SD, and TGRVLEHWHT. Phe795 is a binding site for substrate. Mo-bis(molybdopterin guanine dinucleotide) is bound by residues Asn803 and Lys820.

The protein belongs to the prokaryotic molybdopterin-containing oxidoreductase family. NasA/NapA/NarB subfamily. As to quaternary structure, component of the periplasmic nitrate reductase NapAB complex composed of NapA and NapB. [4Fe-4S] cluster is required as a cofactor. Mo-bis(molybdopterin guanine dinucleotide) serves as cofactor. Predicted to be exported by the Tat system. The position of the signal peptide cleavage has not been experimentally proven.

Its subcellular location is the periplasm. It catalyses the reaction 2 Fe(II)-[cytochrome] + nitrate + 2 H(+) = 2 Fe(III)-[cytochrome] + nitrite + H2O. Catalytic subunit of the periplasmic nitrate reductase complex NapAB. Receives electrons from NapB and catalyzes the reduction of nitrate to nitrite. The sequence is that of Periplasmic nitrate reductase from Aeromonas salmonicida (strain A449).